The sequence spans 283 residues: 3-methyl-2-oxobutanoate hydroxymethyltransferase (283 aa).

Mg(2+) is bound by residues D44 and D83. Residues 44–45 (DS), D83, and K112 each bind 3-methyl-2-oxobutanoate. A Mg(2+)-binding site is contributed by E114. Residue E181 is the Proton acceptor of the active site.

This sequence belongs to the PanB family. Homodecamer; pentamer of dimers. Requires Mg(2+) as cofactor.

The protein resides in the cytoplasm. The enzyme catalyses 3-methyl-2-oxobutanoate + (6R)-5,10-methylene-5,6,7,8-tetrahydrofolate + H2O = 2-dehydropantoate + (6S)-5,6,7,8-tetrahydrofolate. It functions in the pathway cofactor biosynthesis; coenzyme A biosynthesis. Catalyzes the reversible reaction in which hydroxymethyl group from 5,10-methylenetetrahydrofolate is transferred onto alpha-ketoisovalerate to form ketopantoate. In Pyrococcus furiosus (strain ATCC 43587 / DSM 3638 / JCM 8422 / Vc1), this protein is 3-methyl-2-oxobutanoate hydroxymethyltransferase.